The chain runs to 257 residues: tRNA (cytidine/uridine/adenosine-2'-O-)-methyltransferase TrmJ (257 aa).

Residues 79 to 82 (TSAR), 115 to 117 (GRE), Ile135, and 142 to 144 (GSL) contribute to the S-adenosyl-L-methionine site.

The protein belongs to the class IV-like SAM-binding methyltransferase superfamily. RNA methyltransferase TrmH family. In terms of assembly, homodimer.

The protein localises to the cytoplasm. It carries out the reaction cytidine(32) in tRNA + S-adenosyl-L-methionine = 2'-O-methylcytidine(32) in tRNA + S-adenosyl-L-homocysteine + H(+). It catalyses the reaction uridine(32) in tRNA + S-adenosyl-L-methionine = 2'-O-methyluridine(32) in tRNA + S-adenosyl-L-homocysteine + H(+). The enzyme catalyses adenosine(32) in tRNA + S-adenosyl-L-methionine = 2'-O-methyladenosine(32) in tRNA + S-adenosyl-L-homocysteine + H(+). Catalyzes the formation of 2'O-methylated cytidine (Cm32), 2'O-methylated uridine (Um32) or 2'O-methylated adenosine (Am32) at position 32 in tRNA. Confers resistance to oxidative stress. The protein is tRNA (cytidine/uridine/adenosine-2'-O-)-methyltransferase TrmJ of Pseudomonas aeruginosa (strain UCBPP-PA14).